Here is a 435-residue protein sequence, read N- to C-terminus: Probable exopolygalacturonase B (435 aa).

The N-terminal stretch at 1–15 is a signal peptide; the sequence is MKFFLATLFASAVSS. 3 N-linked (GlcNAc...) asparagine glycosylation sites follow: N59, N184, and N224. PbH1 repeat units lie at residues 208-239, 240-261, 262-283, 294-315, and 326-347; these read SKDVSFDDVYIHAFSTNKSALPKNSDGFDSLN, VDGLTVTNTRVDVGDDCFSPKP, NTTNIFVQNLLCNNTHGVSMGS, IEHAYIENVTLLNGQNGARLKA, and INNITYKNIRIENTDAPVVLDQ. The active-site Proton donor is D254. An intrachain disulfide couples C256 to C273. 2 N-linked (GlcNAc...) asparagine glycosylation sites follow: N262 and N274. The active site involves H277. N301, N328, N365, and N373 each carry an N-linked (GlcNAc...) asparagine glycan. A PbH1 6 repeat occupies 366–388; that stretch reads VTNILFENISGTSSGKNGKVVAD. Cysteines 391 and 397 form a disulfide. N406 carries an N-linked (GlcNAc...) asparagine glycan.

Belongs to the glycosyl hydrolase 28 family.

It localises to the secreted. It catalyses the reaction [(1-&gt;4)-alpha-D-galacturonosyl](n) + H2O = alpha-D-galacturonate + [(1-&gt;4)-alpha-D-galacturonosyl](n-1). In terms of biological role, specific in hydrolyzing the terminal glycosidic bond of polygalacturonic acid and oligogalacturonates. This chain is Probable exopolygalacturonase B (pgxB), found in Aspergillus oryzae (strain ATCC 42149 / RIB 40) (Yellow koji mold).